The following is a 66-amino-acid chain: Brevinin-1CDYd (66 aa).

Positions 1–22 are cleaved as a signal peptide; sequence MFTLKKSLLILFFLGTINFSLC. The propeptide occupies 23-44; it reads EEERNAEEERRDDPEERDVEVE. An intrachain disulfide couples cysteine 60 to cysteine 66.

Belongs to the frog skin active peptide (FSAP) family. Brevinin subfamily. As to expression, expressed by the skin glands.

It is found in the secreted. Antimicrobial peptide. The protein is Brevinin-1CDYd of Rana dybowskii (Dybovsky's frog).